The sequence spans 85 residues: U4-theraphotoxin-Hhn1l (85 aa).

Positions 1 to 22 (MKVTLIAFLTCAAVLVLHTTAA) are cleaved as a signal peptide. Residues 23-48 (EELEAESQLMGVGMPDTELAAVDEER) constitute a propeptide that is removed on maturation. 3 disulfides stabilise this stretch: C52–C66, C56–C77, and C71–C82.

This sequence belongs to the neurotoxin 12 (Hwtx-2) family. 02 (Hwtx-2) subfamily. In terms of tissue distribution, expressed by the venom gland.

It is found in the secreted. Functionally, postsynaptic neurotoxin. This chain is U4-theraphotoxin-Hhn1l, found in Cyriopagopus hainanus (Chinese bird spider).